The following is a 277-amino-acid chain: MSLRFTKMHGLGNDFVVIDAIRQSVDLTPEQVRRLADRHFGIGCDQLLVVEEATRPDVDFRYRIFNADGGEVEQCGNGARCFVRFVHEQGLTAKRRIRVETRSGIIAPQLEDDGLVTVDMGVPVLEPARVPFVSDSDAIVQPLDVGGETVAITAVSMGNPHAVQVVADVDAAPVAAQGALIERHPRFPARVNAGFVQVVDAHRIRLRVFERGAGETLACGTGACAAVVTVILRELAQSPVRVETRGGELDIAWEGPGQPVLMTGPAVTVFAGEIDVD.

Substrate contacts are provided by N13, Q46, and N66. C75 (proton donor) is an active-site residue. Substrate-binding positions include 76–77 (GN), N159, N192, and 210–211 (ER). C219 acts as the Proton acceptor in catalysis. 220–221 (GT) serves as a coordination point for substrate.

The protein belongs to the diaminopimelate epimerase family. In terms of assembly, homodimer.

It is found in the cytoplasm. The catalysed reaction is (2S,6S)-2,6-diaminopimelate = meso-2,6-diaminopimelate. Its pathway is amino-acid biosynthesis; L-lysine biosynthesis via DAP pathway; DL-2,6-diaminopimelate from LL-2,6-diaminopimelate: step 1/1. In terms of biological role, catalyzes the stereoinversion of LL-2,6-diaminopimelate (L,L-DAP) to meso-diaminopimelate (meso-DAP), a precursor of L-lysine and an essential component of the bacterial peptidoglycan. This chain is Diaminopimelate epimerase, found in Aromatoleum aromaticum (strain DSM 19018 / LMG 30748 / EbN1) (Azoarcus sp. (strain EbN1)).